The primary structure comprises 343 residues: Ribosome production factor 1 (343 aa).

Composition is skewed to basic and acidic residues over residues 1-10 (MAEKKGPEAK) and 82-91 (EREALGDKAP). 2 disordered regions span residues 1-51 (MAEK…LSEI) and 77-97 (KKRKKEREALGDKAPPKPVPK). In terms of domain architecture, Brix spans 136 to 319 (PKILITTSDR…LRSLQKGTFD (184 aa)). Residues 297 to 314 (VGIQELGPRFTLKLRSLQ) form an RNA-binding region.

It is found in the nucleus. The protein localises to the nucleolus. Its function is as follows. May be required for ribosome biogenesis. This Xenopus laevis (African clawed frog) protein is Ribosome production factor 1 (rpf1).